The primary structure comprises 152 residues: Aminoglycoside N(6')-acetyltransferase type 1 (152 aa).

Residues 5–152 (PLVRPVETTD…AQVRCFRKPL (148 aa)) form the N-acetyltransferase domain. The substrate site is built by Trp-26, Tyr-73, Glu-86, and Asp-122. Asn-127 serves as a coordination point for acetyl-CoA.

As to quaternary structure, homodimer.

The catalysed reaction is kanamycin B + acetyl-CoA = N(6')-acetylkanamycin B + CoA + H(+). In terms of biological role, catalyzes the transfer of an acetyl group from acetyl-CoA to the 6'-amino group of aminoglycoside molecules conferring resistance to antibiotics containing the purpurosamine ring including amikacin. The chain is Aminoglycoside N(6')-acetyltransferase type 1 (aacA7) from Klebsiella aerogenes (Enterobacter aerogenes).